Consider the following 471-residue polypeptide: 5-hydroxytryptamine receptor 2A (471 aa).

The Extracellular segment spans residues 1–80 (MEILCEDNIS…LQEKNWSALL (80 aa)). Residues asparagine 8, asparagine 38, asparagine 44, asparagine 51, and asparagine 54 are each glycosylated (N-linked (GlcNAc...) asparagine). A helical membrane pass occupies residues 81-97 (TTVVIILTIAGNILVIM). The Cytoplasmic segment spans residues 98–111 (AVSLEKKLQNATNY). The chain crosses the membrane as a helical span at residues 112–137 (FLMSLAIADMLLGFLVMPVSMLTILY). The Extracellular segment spans residues 138–146 (GYRWPLPSK). A helical membrane pass occupies residues 147-171 (LCAIWIYLDVLFSTASIMHLCAISL). An intrachain disulfide couples cysteine 148 to cysteine 227. Residue aspartate 155 coordinates serotonin. Positions 172 to 174 (DRY) match the DRY motif; important for ligand-induced conformation changes motif. The Cytoplasmic portion of the chain corresponds to 172 to 191 (DRYVAIQNPIHHSRFNSRTK). Residues 192–215 (AFLKIIAVWTISVGISMPIPVFGL) traverse the membrane as a helical segment. Residues 216-232 (QDDSKVFKEGSCLLADD) are Extracellular-facing. A helical membrane pass occupies residues 233–258 (NFVLIGSFVAFFIPLTIMVITYFLTI). The Cytoplasmic segment spans residues 259–322 (KSLQKEATLC…QSISNEQKAC (64 aa)). Serine 280 carries the post-translational modification Phosphoserine. The chain crosses the membrane as a helical span at residues 323-348 (KVLGIVFFLFVVMWCPFFITNIMAVI). Residue asparagine 343 participates in serotonin binding. A disulfide bridge links cysteine 349 with cysteine 353. Topologically, residues 349-356 (CKESCNEN) are extracellular. The helical transmembrane segment at 357 to 382 (VIGALLNVFVWIGYLSSAVNPLVYTL) threads the bilayer. The short motif at 376–380 (NPLVY) is the NPxxY motif; important for ligand-induced conformation changes and signaling element. Over 383–471 (FNKTYRSAFS…ETVNEKVSCV (89 aa)) the chain is Cytoplasmic. A PDZ-binding motif is present at residues 469 to 471 (SCV).

This sequence belongs to the G-protein coupled receptor 1 family. As to quaternary structure, interacts (via C-terminus) with MPDZ and PATJ. May interact (via C-terminus) with MPP3, PRDX6, DLG4, DLG1, CASK, APBA1 and MAGI2. Interacts with GRM2 and DRD2; this may affect signaling. In terms of tissue distribution, detected in adult intestine, especially in mucosal epithelium, longitudinal and circular layers of muscularis externa and myenteric plexuses. Highly expressed in Paneth cells, and detected at lower levels in enterocytes (at protein level). Detected in brain cortex.

Its subcellular location is the cell membrane. The protein localises to the cell projection. The protein resides in the axon. It localises to the cytoplasmic vesicle. It is found in the membrane. Its subcellular location is the caveola. The protein localises to the dendrite. The protein resides in the presynapse. Its activity is regulated as follows. G-protein coupled receptor activity is regulated by lipids: oleamide increases HTR2A-mediated activity. In terms of biological role, G-protein coupled receptor for 5-hydroxytryptamine (serotonin). Also functions as a receptor for various drugs and psychoactive substances, including mescaline, psilocybin, 1-(2,5-dimethoxy-4-iodophenyl)-2-aminopropane (DOI) and lysergic acid diethylamide (LSD). Ligand binding causes a conformation change that triggers signaling via guanine nucleotide-binding proteins (G proteins) and modulates the activity of downstream effectors. HTR2A is coupled to G(q)/G(11) G alpha proteins and activates phospholipase C-beta, releasing diacylglycerol (DAG) and inositol 1,4,5-trisphosphate (IP3) second messengers that modulate the activity of phosphatidylinositol 3-kinase and promote the release of Ca(2+) ions from intracellular stores, respectively. Beta-arrestin family members inhibit signaling via G proteins and mediate activation of alternative signaling pathways. Affects neural activity, perception, cognition and mood. Plays a role in the regulation of behavior, including responses to anxiogenic situations and psychoactive substances. Plays a role in intestinal smooth muscle contraction, and may play a role in arterial vasoconstriction. The protein is 5-hydroxytryptamine receptor 2A (Htr2a) of Rattus norvegicus (Rat).